The sequence spans 264 residues: TLC domain-containing protein 4-B (264 aa).

The next 6 helical transmembrane spans lie at 6–26 (VYVV…VSPV), 50–70 (LVST…LWYD), 84–104 (LVKL…LLLA), 110–130 (MGDV…GYVL), 169–189 (LVVA…IAVM), and 210–230 (LAIQ…NIIW). One can recognise a TLC domain in the interval 41 to 243 (NKLNDWNSRL…IARGCYKVIT (203 aa)).

It belongs to the TLCD4 family.

The protein resides in the membrane. This Danio rerio (Zebrafish) protein is TLC domain-containing protein 4-B (tlcd4b).